Here is a 630-residue protein sequence, read N- to C-terminus: Polypeptide N-acetylgalactosaminyltransferase 5 (630 aa).

The Cytoplasmic portion of the chain corresponds to 1–20 (MTFSTFTRKMRGRMRSNTCR). The helical; Signal-anchor for type II membrane protein transmembrane segment at 21 to 38 (IVLLTSLVWVIFDFVLIA) threads the bilayer. The Lumenal portion of the chain corresponds to 39–630 (RYSDCIGKDG…MESKFKWQAH (592 aa)). A glycan (N-linked (GlcNAc...) asparagine) is linked at Asn-166. Disulfide bonds link Cys-177-Cys-410, Cys-401-Cys-479, Cys-513-Cys-530, Cys-553-Cys-568, and Cys-594-Cys-611. The interval 186 to 296 (LPTTSIVIVF…EGWLEPLLAR (111 aa)) is catalytic subdomain A. Residues Asp-227 and Arg-257 each contribute to the substrate site. Asp-280 and His-282 together coordinate Mn(2+). A catalytic subdomain B region spans residues 356–418 (PLRTPTMAGG…PCSHVGHVFR (63 aa)). A substrate-binding site is contributed by Trp-387. His-415 lines the Mn(2+) pocket. Residues Arg-418 and Tyr-423 each coordinate substrate. In terms of domain architecture, Ricin B-type lectin spans 500–622 (YYLGEIRNAE…YGKGQQWLME (123 aa)).

The protein belongs to the glycosyltransferase 2 family. GalNAc-T subfamily. Requires Mn(2+) as cofactor. As to expression, expressed during oogenesis, in the somatically derived follicle cells that surround the developing oocyte, which are involved in the maturation of the oocyte and construction of the egg shell, as well as playing a role in subsequent embryonic pattern formation. During embryonic stages 9-11, expressed in the primordium of the foregut, midgut and hindgut. Expressed in salivary glands from embryonic stage 12 onwards. During embryonic stages 12-13, expressed in the posterior midgut and hindgut. During embryonic stages 14-17, expressed in the hindgut and the posterior spiracles. Expression is also detected in the epidermis and antennomaxillary complex at embryonic stages 16-17. In third instar larvae, ubiquitously expressed in wing, eye-antennal, leg and haltere imaginal disks.

The protein localises to the golgi apparatus membrane. It carries out the reaction L-seryl-[protein] + UDP-N-acetyl-alpha-D-galactosamine = a 3-O-[N-acetyl-alpha-D-galactosaminyl]-L-seryl-[protein] + UDP + H(+). The catalysed reaction is L-threonyl-[protein] + UDP-N-acetyl-alpha-D-galactosamine = a 3-O-[N-acetyl-alpha-D-galactosaminyl]-L-threonyl-[protein] + UDP + H(+). It participates in protein modification; protein glycosylation. In terms of biological role, catalyzes the initial reaction in O-linked oligosaccharide biosynthesis, the transfer of an N-acetyl-D-galactosamine residue to a serine or threonine residue on the protein receptor. It can both act as a peptide transferase that transfers GalNAc onto unmodified peptide substrates, and as a glycopeptide transferase that requires the prior addition of a GalNAc on a peptide before adding additional GalNAc moieties. Prefers EA2 as substrate. In the larval midgut, required for O-glycosylation of apical and luminal proteins within copper cells enabling proper gut acidification. This is Polypeptide N-acetylgalactosaminyltransferase 5 from Drosophila melanogaster (Fruit fly).